Reading from the N-terminus, the 364-residue chain is Glycosyltransferase 8 domain-containing protein 1 (364 aa).

The Cytoplasmic segment spans residues 1–5; sequence MRRVH. A helical; Signal-anchor for type II membrane protein membrane pass occupies residues 6–26; sequence ITVILLAAVIFLLVLHHNILG. Residues 27–364 are Lumenal-facing; the sequence is LSDILKRQNS…QFSLIRRHAE (338 aa). Residues asparagine 102, asparagine 247, and asparagine 255 are each glycosylated (N-linked (GlcNAc...) asparagine).

Belongs to the glycosyltransferase 8 family.

The protein localises to the membrane. This Xenopus laevis (African clawed frog) protein is Glycosyltransferase 8 domain-containing protein 1 (glt8d1).